A 175-amino-acid chain; its full sequence is MQPKNCTILKKSKQELFPCQTFILLTGKVKNTDSLFYQTVFRSCPLKYWLLQAGVSMLINRSDSTNLVVQARGLKFTNCSISQRTVLRQGLKRQSITTKESSCFLLWEELSKSEEVNSSLLFHTSWLMVTCCLKYIYMYDICTCFLFCAFVTSIFIETDYSIFFLLTASRGIAQF.

A helical transmembrane segment spans residues 143–166 (TCFLFCAFVTSIFIETDYSIFFLL).

The protein localises to the membrane. This is an uncharacterized protein from Saccharomyces cerevisiae (strain ATCC 204508 / S288c) (Baker's yeast).